Reading from the N-terminus, the 878-residue chain is Outer membrane usher protein FimD (878 aa).

The first 45 residues, 1–45 (MSYLNLRLYQRNTQCLHIRKHRLAGFFVRLVVACAFAAQAPLSSA), serve as a signal peptide directing secretion. Cysteines 855 and 877 form a disulfide.

It belongs to the fimbrial export usher family.

The protein resides in the cell outer membrane. Its function is as follows. Involved in the export and assembly of FimA fimbrial subunits across the outer membrane. In Escherichia coli (strain K12), this protein is Outer membrane usher protein FimD (fimD).